The primary structure comprises 600 residues: Aspartate--tRNA(Asp/Asn) ligase (600 aa).

Glu-174 contributes to the L-aspartate binding site. The aspartate stretch occupies residues 198-201 (QLFK). Arg-220 lines the L-aspartate pocket. ATP contacts are provided by residues 220–222 (RDE) and Gln-229. His-457 lines the L-aspartate pocket. Glu-491 provides a ligand contact to ATP. Arg-498 serves as a coordination point for L-aspartate. 543–546 (GLDR) is a binding site for ATP.

Belongs to the class-II aminoacyl-tRNA synthetase family. Type 1 subfamily. In terms of assembly, homodimer.

The protein resides in the cytoplasm. It carries out the reaction tRNA(Asx) + L-aspartate + ATP = L-aspartyl-tRNA(Asx) + AMP + diphosphate. Functionally, aspartyl-tRNA synthetase with relaxed tRNA specificity since it is able to aspartylate not only its cognate tRNA(Asp) but also tRNA(Asn). Reaction proceeds in two steps: L-aspartate is first activated by ATP to form Asp-AMP and then transferred to the acceptor end of tRNA(Asp/Asn). This chain is Aspartate--tRNA(Asp/Asn) ligase, found in Burkholderia ambifaria (strain ATCC BAA-244 / DSM 16087 / CCUG 44356 / LMG 19182 / AMMD) (Burkholderia cepacia (strain AMMD)).